Reading from the N-terminus, the 952-residue chain is Isoleucine--tRNA ligase (952 aa).

The short motif at 58–68 (PYANGDIHIGH) is the 'HIGH' region element. Glu-576 serves as a coordination point for L-isoleucyl-5'-AMP. Residues 617–621 (KMSKS) carry the 'KMSKS' region motif. Residue Lys-620 participates in ATP binding. 4 residues coordinate Zn(2+): Cys-915, Cys-918, Cys-935, and Cys-938.

The protein belongs to the class-I aminoacyl-tRNA synthetase family. IleS type 1 subfamily. As to quaternary structure, monomer. Zn(2+) serves as cofactor.

Its subcellular location is the cytoplasm. It catalyses the reaction tRNA(Ile) + L-isoleucine + ATP = L-isoleucyl-tRNA(Ile) + AMP + diphosphate. In terms of biological role, catalyzes the attachment of isoleucine to tRNA(Ile). As IleRS can inadvertently accommodate and process structurally similar amino acids such as valine, to avoid such errors it has two additional distinct tRNA(Ile)-dependent editing activities. One activity is designated as 'pretransfer' editing and involves the hydrolysis of activated Val-AMP. The other activity is designated 'posttransfer' editing and involves deacylation of mischarged Val-tRNA(Ile). The protein is Isoleucine--tRNA ligase of Aliivibrio fischeri (strain ATCC 700601 / ES114) (Vibrio fischeri).